Here is a 164-residue protein sequence, read N- to C-terminus: UPF0114 protein Spro_2386 (164 aa).

The next 3 helical transmembrane spans lie at 15-35, 53-73, and 136-156; these read LLAP…IKFF, LVLT…LVMV, and LMWY…MGYL.

This sequence belongs to the UPF0114 family.

Its subcellular location is the cell membrane. The protein is UPF0114 protein Spro_2386 of Serratia proteamaculans (strain 568).